Consider the following 105-residue polypeptide: UPF0145 protein Aflv_1588 (105 aa).

It belongs to the UPF0145 family.

The polypeptide is UPF0145 protein Aflv_1588 (Anoxybacillus flavithermus (strain DSM 21510 / WK1)).